Reading from the N-terminus, the 218-residue chain is Probable transaldolase (218 aa).

Lysine 84 (schiff-base intermediate with substrate) is an active-site residue.

It belongs to the transaldolase family. Type 3B subfamily.

The protein resides in the cytoplasm. It carries out the reaction D-sedoheptulose 7-phosphate + D-glyceraldehyde 3-phosphate = D-erythrose 4-phosphate + beta-D-fructose 6-phosphate. It functions in the pathway carbohydrate degradation; pentose phosphate pathway; D-glyceraldehyde 3-phosphate and beta-D-fructose 6-phosphate from D-ribose 5-phosphate and D-xylulose 5-phosphate (non-oxidative stage): step 2/3. Its function is as follows. Transaldolase is important for the balance of metabolites in the pentose-phosphate pathway. The sequence is that of Probable transaldolase from Sulfurihydrogenibium sp. (strain YO3AOP1).